Here is a 453-residue protein sequence, read N- to C-terminus: Bifunctional protein GlmU (453 aa).

The interval 1–225 (MNIVILAAGT…EWETLGVNSK (225 aa)) is pyrophosphorylase. Residues 6–9 (LAAG), lysine 20, glutamine 71, 76–77 (GT), 98–100 (YGD), glycine 135, glutamate 150, asparagine 165, and asparagine 223 contribute to the UDP-N-acetyl-alpha-D-glucosamine site. Mg(2+) is bound at residue aspartate 100. Asparagine 223 provides a ligand contact to Mg(2+). Residues 226–246 (AQLAELERIHQRNVADALLVD) are linker. The tract at residues 247 to 453 (GVTLADPARV…GYVRPVKKKS (207 aa)) is N-acetyltransferase. UDP-N-acetyl-alpha-D-glucosamine is bound by residues arginine 329 and lysine 347. The active-site Proton acceptor is histidine 359. Tyrosine 362 and asparagine 373 together coordinate UDP-N-acetyl-alpha-D-glucosamine. Residues alanine 376, 382 to 383 (NY), serine 401, and alanine 419 contribute to the acetyl-CoA site.

In the N-terminal section; belongs to the N-acetylglucosamine-1-phosphate uridyltransferase family. The protein in the C-terminal section; belongs to the transferase hexapeptide repeat family. In terms of assembly, homotrimer. Mg(2+) is required as a cofactor.

The protein resides in the cytoplasm. It carries out the reaction alpha-D-glucosamine 1-phosphate + acetyl-CoA = N-acetyl-alpha-D-glucosamine 1-phosphate + CoA + H(+). It catalyses the reaction N-acetyl-alpha-D-glucosamine 1-phosphate + UTP + H(+) = UDP-N-acetyl-alpha-D-glucosamine + diphosphate. It functions in the pathway nucleotide-sugar biosynthesis; UDP-N-acetyl-alpha-D-glucosamine biosynthesis; N-acetyl-alpha-D-glucosamine 1-phosphate from alpha-D-glucosamine 6-phosphate (route II): step 2/2. Its pathway is nucleotide-sugar biosynthesis; UDP-N-acetyl-alpha-D-glucosamine biosynthesis; UDP-N-acetyl-alpha-D-glucosamine from N-acetyl-alpha-D-glucosamine 1-phosphate: step 1/1. The protein operates within bacterial outer membrane biogenesis; LPS lipid A biosynthesis. Its function is as follows. Catalyzes the last two sequential reactions in the de novo biosynthetic pathway for UDP-N-acetylglucosamine (UDP-GlcNAc). The C-terminal domain catalyzes the transfer of acetyl group from acetyl coenzyme A to glucosamine-1-phosphate (GlcN-1-P) to produce N-acetylglucosamine-1-phosphate (GlcNAc-1-P), which is converted into UDP-GlcNAc by the transfer of uridine 5-monophosphate (from uridine 5-triphosphate), a reaction catalyzed by the N-terminal domain. This is Bifunctional protein GlmU from Burkholderia ambifaria (strain ATCC BAA-244 / DSM 16087 / CCUG 44356 / LMG 19182 / AMMD) (Burkholderia cepacia (strain AMMD)).